The following is a 374-amino-acid chain: U-box domain-containing protein 8 (374 aa).

The U-box domain occupies 4 to 79; sequence DLPNDFRCPI…LNFAHVSLKE (76 aa). ARM repeat units follow at residues 126–165, 167–206, 208–248, 250–288, and 289–327; these read SSIR…NLSL, DDNK…SLAV, EVNK…ALCS, PDNR…KCRG, and GREE…CLCC.

As to expression, expressed in the whole plant.

The enzyme catalyses S-ubiquitinyl-[E2 ubiquitin-conjugating enzyme]-L-cysteine + [acceptor protein]-L-lysine = [E2 ubiquitin-conjugating enzyme]-L-cysteine + N(6)-ubiquitinyl-[acceptor protein]-L-lysine.. It participates in protein modification; protein ubiquitination. Its function is as follows. Functions as an E3 ubiquitin ligase. Involved in the age-dependent pseudo-self-compatibility process. The sequence is that of U-box domain-containing protein 8 (PUB8) from Arabidopsis thaliana (Mouse-ear cress).